The primary structure comprises 247 residues: Probable enoyl-CoA hydratase echA6 (247 aa).

This sequence belongs to the enoyl-CoA hydratase/isomerase family.

It catalyses the reaction a (3S)-3-hydroxyacyl-CoA = a (2E)-enoyl-CoA + H2O. It carries out the reaction a 4-saturated-(3S)-3-hydroxyacyl-CoA = a (3E)-enoyl-CoA + H2O. Could possibly oxidize fatty acids using specific components. The chain is Probable enoyl-CoA hydratase echA6 (echA6) from Mycobacterium leprae (strain TN).